We begin with the raw amino-acid sequence, 235 residues long: Triosephosphate isomerase (235 aa).

7 to 9 (NFK) contributes to the substrate binding site. His92 functions as the Electrophile in the catalytic mechanism. Catalysis depends on Glu161, which acts as the Proton acceptor. Positions 167 and 197 each coordinate substrate.

This sequence belongs to the triosephosphate isomerase family. Homodimer.

The protein resides in the cytoplasm. The enzyme catalyses D-glyceraldehyde 3-phosphate = dihydroxyacetone phosphate. The protein operates within carbohydrate biosynthesis; gluconeogenesis. It functions in the pathway carbohydrate degradation; glycolysis; D-glyceraldehyde 3-phosphate from glycerone phosphate: step 1/1. Its function is as follows. Involved in the gluconeogenesis. Catalyzes stereospecifically the conversion of dihydroxyacetone phosphate (DHAP) to D-glyceraldehyde-3-phosphate (G3P). The protein is Triosephosphate isomerase of Helicobacter hepaticus (strain ATCC 51449 / 3B1).